A 362-amino-acid chain; its full sequence is Alanine racemase (362 aa).

The active-site Proton acceptor; specific for D-alanine is Lys35. The residue at position 35 (Lys35) is an N6-(pyridoxal phosphate)lysine. Arg130 is a substrate binding site. Residue Tyr257 is the Proton acceptor; specific for L-alanine of the active site. Met305 lines the substrate pocket.

The protein belongs to the alanine racemase family. It depends on pyridoxal 5'-phosphate as a cofactor.

The catalysed reaction is L-alanine = D-alanine. It participates in amino-acid biosynthesis; D-alanine biosynthesis; D-alanine from L-alanine: step 1/1. Catalyzes the interconversion of L-alanine and D-alanine. May also act on other amino acids. This Nitrosomonas europaea (strain ATCC 19718 / CIP 103999 / KCTC 2705 / NBRC 14298) protein is Alanine racemase (alr).